The sequence spans 442 residues: UDP-N-acetylglucosamine 1-carboxyvinyltransferase (442 aa).

22–23 contacts phosphoenolpyruvate; sequence KN. Arg-94 lines the UDP-N-acetyl-alpha-D-glucosamine pocket. Asp-119 (proton donor) is an active-site residue. 2 residues coordinate UDP-N-acetyl-alpha-D-glucosamine: Asp-309 and Val-331.

Belongs to the EPSP synthase family. MurA subfamily.

The protein localises to the cytoplasm. The catalysed reaction is phosphoenolpyruvate + UDP-N-acetyl-alpha-D-glucosamine = UDP-N-acetyl-3-O-(1-carboxyvinyl)-alpha-D-glucosamine + phosphate. The protein operates within cell wall biogenesis; peptidoglycan biosynthesis. In terms of biological role, cell wall formation. Adds enolpyruvyl to UDP-N-acetylglucosamine. This is UDP-N-acetylglucosamine 1-carboxyvinyltransferase from Chlamydia muridarum (strain MoPn / Nigg).